The following is a 476-amino-acid chain: 3-isopropylmalate dehydratase large subunit (476 aa).

[4Fe-4S] cluster is bound by residues Cys353, Cys413, and Cys416.

It belongs to the aconitase/IPM isomerase family. LeuC type 1 subfamily. As to quaternary structure, heterodimer of LeuC and LeuD. [4Fe-4S] cluster is required as a cofactor.

The enzyme catalyses (2R,3S)-3-isopropylmalate = (2S)-2-isopropylmalate. It participates in amino-acid biosynthesis; L-leucine biosynthesis; L-leucine from 3-methyl-2-oxobutanoate: step 2/4. In terms of biological role, catalyzes the isomerization between 2-isopropylmalate and 3-isopropylmalate, via the formation of 2-isopropylmaleate. The sequence is that of 3-isopropylmalate dehydratase large subunit from Photobacterium profundum (strain SS9).